We begin with the raw amino-acid sequence, 123 residues long: Immunoglobulin lambda variable 5-39 (123 aa).

The signal sequence occupies residues 1–19 (MAWTPLLLLLLSHCTGSLS). Residues 20–44 (QPVLTQPTSLSASPGASARFTCTLR) are framework-1. The Ig-like domain occupies 21-123 (PVLTQPTSLS…YCAIWYSSTS (103 aa)). Residues Cys41 and Cys115 are joined by a disulfide bond. The tract at residues 45–53 (SGINVGTYR) is complementarity-determining-1. The framework-2 stretch occupies residues 54–70 (IYWYQQKPGSLPRYLLR). The segment at 71–77 (YKSDSDK) is complementarity-determining-2. Residues 78-115 (QQGSGVPSRFSGSKDASTNAGLLLISGLQSEDEADYYC) form a framework-3 region. The tract at residues 116-123 (AIWYSSTS) is complementarity-determining-3.

Immunoglobulins are composed of two identical heavy chains and two identical light chains; disulfide-linked.

The protein localises to the secreted. Its subcellular location is the cell membrane. V region of the variable domain of immunoglobulin light chains that participates in the antigen recognition. Immunoglobulins, also known as antibodies, are membrane-bound or secreted glycoproteins produced by B lymphocytes. In the recognition phase of humoral immunity, the membrane-bound immunoglobulins serve as receptors which, upon binding of a specific antigen, trigger the clonal expansion and differentiation of B lymphocytes into immunoglobulins-secreting plasma cells. Secreted immunoglobulins mediate the effector phase of humoral immunity, which results in the elimination of bound antigens. The antigen binding site is formed by the variable domain of one heavy chain, together with that of its associated light chain. Thus, each immunoglobulin has two antigen binding sites with remarkable affinity for a particular antigen. The variable domains are assembled by a process called V-(D)-J rearrangement and can then be subjected to somatic hypermutations which, after exposure to antigen and selection, allow affinity maturation for a particular antigen. The protein is Immunoglobulin lambda variable 5-39 of Homo sapiens (Human).